Here is a 181-residue protein sequence, read N- to C-terminus: dTDP-4-dehydrorhamnose 3,5-epimerase (181 aa).

Residues arginine 23, glutamate 28, 47 to 49, and arginine 59 contribute to the substrate site; that span reads QDN. The active-site Proton acceptor is histidine 62. Lysine 71 and histidine 118 together coordinate substrate. Tyrosine 131 functions as the Proton donor in the catalytic mechanism. Glutamate 142 and lysine 167 together coordinate substrate.

The protein belongs to the dTDP-4-dehydrorhamnose 3,5-epimerase family. As to quaternary structure, homodimer.

The catalysed reaction is dTDP-4-dehydro-6-deoxy-alpha-D-glucose = dTDP-4-dehydro-beta-L-rhamnose. The protein operates within carbohydrate biosynthesis; dTDP-L-rhamnose biosynthesis. It functions in the pathway bacterial outer membrane biogenesis; lipopolysaccharide biosynthesis. Its function is as follows. Catalyzes the epimerization of the C3' and C5'positions of dTDP-6-deoxy-D-xylo-4-hexulose, forming dTDP-6-deoxy-L-lyxo-4-hexulose. The protein is dTDP-4-dehydrorhamnose 3,5-epimerase (rmlC) of Pseudomonas aeruginosa (strain ATCC 15692 / DSM 22644 / CIP 104116 / JCM 14847 / LMG 12228 / 1C / PRS 101 / PAO1).